We begin with the raw amino-acid sequence, 303 residues long: Quinolinate synthase (303 aa).

Iminosuccinate is bound by residues H23 and S40. C85 lines the [4Fe-4S] cluster pocket. Iminosuccinate contacts are provided by residues 111-113 (YVN) and S128. C171 contacts [4Fe-4S] cluster. Residues 197–199 (HPE) and T214 contribute to the iminosuccinate site. C259 is a binding site for [4Fe-4S] cluster.

It belongs to the quinolinate synthase family. Type 2 subfamily. Requires [4Fe-4S] cluster as cofactor.

It is found in the cytoplasm. It catalyses the reaction iminosuccinate + dihydroxyacetone phosphate = quinolinate + phosphate + 2 H2O + H(+). It participates in cofactor biosynthesis; NAD(+) biosynthesis; quinolinate from iminoaspartate: step 1/1. Catalyzes the condensation of iminoaspartate with dihydroxyacetone phosphate to form quinolinate. This is Quinolinate synthase from Thermodesulfovibrio yellowstonii (strain ATCC 51303 / DSM 11347 / YP87).